The following is a 351-amino-acid chain: Blue-sensitive opsin (351 aa).

Over 1–40 (MKQVPEFHEDFYIPIPLDINNLSAYSPFLVPQDHLGNQGI) the chain is Extracellular. An N-linked (GlcNAc...) asparagine glycan is attached at N21. A helical transmembrane segment spans residues 41 to 65 (FMAMSVFMFFIFIGGASINILTILC). The Cytoplasmic segment spans residues 66–77 (TIQFKKLRSHLN). A helical transmembrane segment spans residues 78 to 103 (YILVNLSIANLFVAIFGSPLSFYSFF). Over 104–117 (NRYFIFGATACKIE) the chain is Extracellular. A disulfide bridge connects residues C114 and C191. Residues 118–137 (GFLATLGGMVGLWSLAVVAF) traverse the membrane as a helical segment. Over 138–156 (ERWLVICKPLGNFTFKTPH) the chain is Cytoplasmic. Residues 157-180 (AIAGCILPWISALAASLPPLFGWS) traverse the membrane as a helical segment. At 181–206 (RYIPEGLQCSCGPDWYTTNNKYNNES) the chain is on the extracellular side. The helical transmembrane segment at 207-234 (YVMFLFCFCFAVPFGTIVFCYGQLLITL) threads the bilayer. Residues 235–256 (KLAAKAQADSASTQKAEREVTK) are Cytoplasmic-facing. Residues 257–280 (MVVVMVLGFLVCWAPYASFSLWIV) form a helical membrane-spanning segment. Topologically, residues 281–288 (SHRGEEFD) are extracellular. Residues 289-313 (LRMATIPSCLSKASTVYNPVIYVLM) form a helical membrane-spanning segment. K300 is subject to N6-(retinylidene)lysine. Residues 314–351 (NKQFRSCMMKMVCGKNIEEDEASTSSQVTQVSSVAPEK) are Cytoplasmic-facing.

The protein belongs to the G-protein coupled receptor 1 family. Opsin subfamily. Post-translationally, phosphorylated on some or all of the serine and threonine residues present in the C-terminal region. In terms of tissue distribution, the color pigments are found in the cone photoreceptor cells.

The protein resides in the membrane. In terms of biological role, visual pigments are the light-absorbing molecules that mediate vision. They consist of an apoprotein, opsin, covalently linked to cis-retinal. The protein is Blue-sensitive opsin of Carassius auratus (Goldfish).